The sequence spans 379 residues: UDP-N-acetylglucosamine--N-acetylmuramyl-(pentapeptide) pyrophosphoryl-undecaprenol N-acetylglucosamine transferase (379 aa).

Residues threonine 10–glycine 12, asparagine 124, arginine 161, serine 195, and glutamine 291 each bind UDP-N-acetyl-alpha-D-glucosamine.

It belongs to the glycosyltransferase 28 family. MurG subfamily.

The protein resides in the cell membrane. The catalysed reaction is di-trans,octa-cis-undecaprenyl diphospho-N-acetyl-alpha-D-muramoyl-L-alanyl-D-glutamyl-meso-2,6-diaminopimeloyl-D-alanyl-D-alanine + UDP-N-acetyl-alpha-D-glucosamine = di-trans,octa-cis-undecaprenyl diphospho-[N-acetyl-alpha-D-glucosaminyl-(1-&gt;4)]-N-acetyl-alpha-D-muramoyl-L-alanyl-D-glutamyl-meso-2,6-diaminopimeloyl-D-alanyl-D-alanine + UDP + H(+). Its pathway is cell wall biogenesis; peptidoglycan biosynthesis. Functionally, cell wall formation. Catalyzes the transfer of a GlcNAc subunit on undecaprenyl-pyrophosphoryl-MurNAc-pentapeptide (lipid intermediate I) to form undecaprenyl-pyrophosphoryl-MurNAc-(pentapeptide)GlcNAc (lipid intermediate II). In Thermobifida fusca (strain YX), this protein is UDP-N-acetylglucosamine--N-acetylmuramyl-(pentapeptide) pyrophosphoryl-undecaprenol N-acetylglucosamine transferase.